The sequence spans 159 residues: Phosphopantetheine adenylyltransferase (159 aa).

Position 10 (Thr-10) interacts with substrate. Residues 10–11 (TF) and His-18 each bind ATP. Residues Lys-42, Leu-74, and Arg-88 each contribute to the substrate site. Residues 89–91 (GLR), Glu-99, and 124–130 (YSFISSS) each bind ATP.

This sequence belongs to the bacterial CoaD family. As to quaternary structure, homohexamer. Requires Mg(2+) as cofactor.

It is found in the cytoplasm. It carries out the reaction (R)-4'-phosphopantetheine + ATP + H(+) = 3'-dephospho-CoA + diphosphate. Its pathway is cofactor biosynthesis; coenzyme A biosynthesis; CoA from (R)-pantothenate: step 4/5. In terms of biological role, reversibly transfers an adenylyl group from ATP to 4'-phosphopantetheine, yielding dephospho-CoA (dPCoA) and pyrophosphate. This is Phosphopantetheine adenylyltransferase from Campylobacter hominis (strain ATCC BAA-381 / DSM 21671 / CCUG 45161 / LMG 19568 / NCTC 13146 / CH001A).